The sequence spans 66 residues: Large ribosomal subunit protein uL29 (66 aa).

It belongs to the universal ribosomal protein uL29 family.

The chain is Large ribosomal subunit protein uL29 from Rhizobium etli (strain CIAT 652).